Reading from the N-terminus, the 81-residue chain is Small ribosomal subunit protein bS18 (81 aa).

This sequence belongs to the bacterial ribosomal protein bS18 family. Part of the 30S ribosomal subunit. Forms a tight heterodimer with protein bS6.

Binds as a heterodimer with protein bS6 to the central domain of the 16S rRNA, where it helps stabilize the platform of the 30S subunit. This is Small ribosomal subunit protein bS18 from Lactococcus lactis subsp. cremoris (strain MG1363).